Consider the following 101-residue polypeptide: Large ribosomal subunit protein uL24 (101 aa).

Belongs to the universal ribosomal protein uL24 family. Part of the 50S ribosomal subunit.

In terms of biological role, one of two assembly initiator proteins, it binds directly to the 5'-end of the 23S rRNA, where it nucleates assembly of the 50S subunit. Functionally, one of the proteins that surrounds the polypeptide exit tunnel on the outside of the subunit. In Streptococcus pyogenes serotype M1, this protein is Large ribosomal subunit protein uL24.